The following is a 150-amino-acid chain: Large ribosomal subunit protein bL9 (150 aa).

Belongs to the bacterial ribosomal protein bL9 family.

Its function is as follows. Binds to the 23S rRNA. This is Large ribosomal subunit protein bL9 from Cupriavidus metallidurans (strain ATCC 43123 / DSM 2839 / NBRC 102507 / CH34) (Ralstonia metallidurans).